A 181-amino-acid chain; its full sequence is Diphosphoinositol polyphosphate phosphohydrolase NUDT4B (181 aa).

Substrate-binding positions include Arg10, 18 to 20 (KKR), and 39 to 41 (SSR). The region spanning 18-145 (KKRAACLCFR…VHAEYLEKLK (128 aa)) is the Nudix hydrolase domain. Positions 50 and 66 each coordinate Mg(2+). The Nudix box motif lies at 51–72 (GGMEPEEEPGGAAVREVYEEAG). Residue Glu69 is the Proton acceptor of the active site. Residue Glu70 participates in Mg(2+) binding. Residues 90–92 (RKH), Arg116, and Lys134 each bind substrate.

Belongs to the Nudix hydrolase family. DIPP subfamily. Mg(2+) is required as a cofactor. Requires Mn(2+) as cofactor.

Its subcellular location is the cytoplasm. The catalysed reaction is diphospho-myo-inositol polyphosphate + H2O = myo-inositol polyphosphate + phosphate.. Cleaves a beta-phosphate from the diphosphate groups in PP-InsP5 (diphosphoinositol pentakisphosphate), PP-InsP4 and [PP]2-InsP4 (bisdiphosphoinositol tetrakisphosphate), suggesting that it may play a role in signal transduction. Also able to catalyze the hydrolysis of dinucleoside oligophosphate Ap6A, but not Ap5A. The major reaction products are ADP and p4a from Ap6A. Also able to hydrolyze 5-phosphoribose 1-diphosphate. Does not play a role in U8 snoRNA decapping activity. Binds U8 snoRNA. In Homo sapiens (Human), this protein is Diphosphoinositol polyphosphate phosphohydrolase NUDT4B.